The primary structure comprises 544 residues: CTP synthase (544 aa).

An amidoligase domain region spans residues 1–265 (MTKFIFVTGG…DNIITEQLQL (265 aa)). A CTP-binding site is contributed by serine 13. Residue serine 13 participates in UTP binding. ATP is bound by residues 14–19 (SLGKGI) and aspartate 71. 2 residues coordinate Mg(2+): aspartate 71 and glutamate 139. CTP-binding positions include 146–148 (DIE), 186–191 (KTKPTQ), and lysine 222. Residues 186 to 191 (KTKPTQ) and lysine 222 contribute to the UTP site. One can recognise a Glutamine amidotransferase type-1 domain in the interval 290-544 (KIAMVGKYVD…VKAALNNKKA (255 aa)). Residue glycine 353 coordinates L-glutamine. The Nucleophile; for glutamine hydrolysis role is filled by cysteine 380. L-glutamine-binding positions include 381 to 384 (LGMQ), glutamate 404, and arginine 471. Catalysis depends on residues histidine 517 and glutamate 519.

Belongs to the CTP synthase family. In terms of assembly, homotetramer.

The catalysed reaction is UTP + L-glutamine + ATP + H2O = CTP + L-glutamate + ADP + phosphate + 2 H(+). It catalyses the reaction L-glutamine + H2O = L-glutamate + NH4(+). The enzyme catalyses UTP + NH4(+) + ATP = CTP + ADP + phosphate + 2 H(+). It participates in pyrimidine metabolism; CTP biosynthesis via de novo pathway; CTP from UDP: step 2/2. Its activity is regulated as follows. Allosterically activated by GTP, when glutamine is the substrate; GTP has no effect on the reaction when ammonia is the substrate. The allosteric effector GTP functions by stabilizing the protein conformation that binds the tetrahedral intermediate(s) formed during glutamine hydrolysis. Inhibited by the product CTP, via allosteric rather than competitive inhibition. In terms of biological role, catalyzes the ATP-dependent amination of UTP to CTP with either L-glutamine or ammonia as the source of nitrogen. Regulates intracellular CTP levels through interactions with the four ribonucleotide triphosphates. The chain is CTP synthase from Neisseria gonorrhoeae (strain ATCC 700825 / FA 1090).